Here is a 150-residue protein sequence, read N- to C-terminus: Protein SLM6 (150 aa).

Over 1–76 the chain is Extracellular; that stretch reads MCSRFSSTSL…SLLRSGVFPS (76 aa). A helical transmembrane segment spans residues 77 to 97; it reads WLFCMFSSILALAISNSFFFF. Residues 98–104 lie on the Cytoplasmic side of the membrane; sequence SSNACFS. The chain crosses the membrane as a helical span at residues 105 to 125; it reads LLFNSFLVTGFSFSADLLVLA. Residues 126–150 lie on the Extracellular side of the membrane; that stretch reads AAADTLESNVSNDIGGNCATRLFKL.

The protein localises to the membrane. This chain is Protein SLM6, found in Saccharomyces cerevisiae (strain ATCC 204508 / S288c) (Baker's yeast).